A 93-amino-acid polypeptide reads, in one-letter code: UPF0358 protein ABC2396 (93 aa).

Belongs to the UPF0358 family.

The protein is UPF0358 protein ABC2396 of Shouchella clausii (strain KSM-K16) (Alkalihalobacillus clausii).